Reading from the N-terminus, the 1486-residue chain is Chromosome partition protein MukB (1486 aa).

ATP is bound at residue 34–41; sequence GGNGAGKS. Coiled-coil stretches lie at residues 326–418, 444–480, and 509–603; these read LEAD…QYNQ, LETF…QAYQ, and RHLA…RAPV. Residues 666 to 783 form a flexible hinge region; sequence PGGSEDQRLN…EVPLFGRAAR (118 aa). 3 coiled-coil regions span residues 835–923, 977–1115, and 1209–1266; these read EAEI…AKLE, EMLS…TAKA, and VEAI…QNVS.

The protein belongs to the SMC family. MukB subfamily. As to quaternary structure, homodimerization via its hinge domain. Binds to DNA via its C-terminal region. Interacts, and probably forms a ternary complex, with MukE and MukF via its C-terminal region. The complex formation is stimulated by calcium or magnesium. Interacts with tubulin-related protein FtsZ.

Its subcellular location is the cytoplasm. It is found in the nucleoid. Functionally, plays a central role in chromosome condensation, segregation and cell cycle progression. Functions as a homodimer, which is essential for chromosome partition. Involved in negative DNA supercoiling in vivo, and by this means organize and compact chromosomes. May achieve or facilitate chromosome segregation by condensation DNA from both sides of a centrally located replisome during cell division. This is Chromosome partition protein MukB from Escherichia coli O17:K52:H18 (strain UMN026 / ExPEC).